The primary structure comprises 1104 residues: Carbamoyl phosphate synthase large chain (1104 aa).

A carboxyphosphate synthetic domain region spans residues 1-402; it reads MPRRTDLKSV…ALQKALRSTE (402 aa). Residues Arg-129, Arg-169, Gly-175, Gly-176, Glu-208, Ile-210, Glu-215, Gly-241, Val-242, His-243, Gln-285, and Glu-299 each coordinate ATP. The ATP-grasp 1 domain maps to 133 to 328; sequence KGVVERCGAE…IAKIAARLAV (196 aa). Mg(2+) contacts are provided by Gln-285, Glu-299, and Asn-301. Residues Gln-285, Glu-299, and Asn-301 each contribute to the Mn(2+) site. Positions 403–547 are oligomerization domain; that stretch reads KRGATFSWAG…YSSYDEEDET (145 aa). The interval 548 to 948 is carbamoyl phosphate synthetic domain; it reads RPREKAAIVI…AFGKSQTAAY (401 aa). The region spanning 676-867 is the ATP-grasp 2 domain; that stretch reads GQVLERAGLV…LAKAAARLMA (192 aa). ATP is bound by residues Arg-712, Arg-751, Leu-753, Glu-758, Gly-783, Ile-784, His-785, Ser-786, Gln-826, and Glu-838. Gln-826, Glu-838, and Asn-840 together coordinate Mg(2+). 3 residues coordinate Mn(2+): Gln-826, Glu-838, and Asn-840. Residues 949-1099 form the MGS-like domain; it reads GGLPTAGTAF…QEHTARLNAA (151 aa). Residues 949-1104 form an allosteric domain region; it reads GGLPTAGTAF…RLNAAWEGRA (156 aa).

Belongs to the CarB family. In terms of assembly, composed of two chains; the small (or glutamine) chain promotes the hydrolysis of glutamine to ammonia, which is used by the large (or ammonia) chain to synthesize carbamoyl phosphate. Tetramer of heterodimers (alpha,beta)4. Mg(2+) serves as cofactor. The cofactor is Mn(2+).

The enzyme catalyses hydrogencarbonate + L-glutamine + 2 ATP + H2O = carbamoyl phosphate + L-glutamate + 2 ADP + phosphate + 2 H(+). It carries out the reaction hydrogencarbonate + NH4(+) + 2 ATP = carbamoyl phosphate + 2 ADP + phosphate + 2 H(+). The protein operates within amino-acid biosynthesis; L-arginine biosynthesis; carbamoyl phosphate from bicarbonate: step 1/1. It functions in the pathway pyrimidine metabolism; UMP biosynthesis via de novo pathway; (S)-dihydroorotate from bicarbonate: step 1/3. In terms of biological role, large subunit of the glutamine-dependent carbamoyl phosphate synthetase (CPSase). CPSase catalyzes the formation of carbamoyl phosphate from the ammonia moiety of glutamine, carbonate, and phosphate donated by ATP, constituting the first step of 2 biosynthetic pathways, one leading to arginine and/or urea and the other to pyrimidine nucleotides. The large subunit (synthetase) binds the substrates ammonia (free or transferred from glutamine from the small subunit), hydrogencarbonate and ATP and carries out an ATP-coupled ligase reaction, activating hydrogencarbonate by forming carboxy phosphate which reacts with ammonia to form carbamoyl phosphate. This is Carbamoyl phosphate synthase large chain from Kineococcus radiotolerans (strain ATCC BAA-149 / DSM 14245 / SRS30216).